We begin with the raw amino-acid sequence, 1674 residues long: Maestro heat-like repeat-containing protein family member 2A (1674 aa).

A disordered region spans residues 1–26; it reads MTEAITEAAVASSEEVSEERDDLGPL. HEAT repeat units follow at residues 73-96, 97-133, 195-234, 254-292, 382-419, 424-461, 573-612, 615-641, 642-679, 739-776, 993-1030, 1221-1263, 1381-1420, and 1627-1674; these read ATTEPSVVINTLIRCLQVPEISTQ, RKVNIYNILQDIIQQEGELEEQCVQRLVAIASKEMRE, MPYMGITLATIFTMLRLANEAKIRQAICSAMETFCETVQF, LKVFPMYRYFVTVWLRHYNPEVKLGVIKSLKPMLGLLLP, SYPKELMKFFFSQMETNKEAVRVGTLNLIRAIVSADEP, RAIYLAIRVVKNTISDTRSKVRMAILHIIGQLALCGYQ, PAPQKLLARLLVLMSSPYKGEGRGIAMLNLLRTLSQSIAP, ADMWELEIALLVRYLEEHTEFTWDQKA, WEDKLIQFLRNSLKKTRGSSWSLRLSKELNNQIASFDS, KTVLNVLHDFEERIQESEQSWQISAWRKDHPWRRETVK, GQFGTMVGLIAPCTCDAHQRTRMASMNVLSSLLDLHAS, DPLM…SHRP, EKLLKPAALLLEKGADQEEDEALRVLSLRALGNMALGAPK, and LDFP…QGMS.

The polypeptide is Maestro heat-like repeat-containing protein family member 2A (MROH2A) (Homo sapiens (Human)).